The following is a 296-amino-acid chain: Small ribosomal subunit biogenesis GTPase RsgA (296 aa).

One can recognise a CP-type G domain in the interval 65–226 (TNELIRPPIS…VADTPGFSSL (162 aa)). GTP contacts are provided by residues 114–117 (TKMD) and 169–177 (GQSGVGKSS). Zn(2+) contacts are provided by Cys250, Cys255, His257, and Cys263.

It belongs to the TRAFAC class YlqF/YawG GTPase family. RsgA subfamily. As to quaternary structure, monomer. Associates with 30S ribosomal subunit, binds 16S rRNA. Zn(2+) is required as a cofactor.

It is found in the cytoplasm. In terms of biological role, one of several proteins that assist in the late maturation steps of the functional core of the 30S ribosomal subunit. Helps release RbfA from mature subunits. May play a role in the assembly of ribosomal proteins into the subunit. Circularly permuted GTPase that catalyzes slow GTP hydrolysis, GTPase activity is stimulated by the 30S ribosomal subunit. The protein is Small ribosomal subunit biogenesis GTPase RsgA of Bacillus velezensis (strain DSM 23117 / BGSC 10A6 / LMG 26770 / FZB42) (Bacillus amyloliquefaciens subsp. plantarum).